The sequence spans 436 residues: Glutamyl-tRNA reductase (436 aa).

Substrate-binding positions include 49 to 52, Ser-109, 114 to 116, and Gln-120; these read TCNR and EGQ. Cys-50 (nucleophile) is an active-site residue. 198–203 is an NADP(+) binding site; the sequence is GAGRMS.

Belongs to the glutamyl-tRNA reductase family. In terms of assembly, homodimer.

It carries out the reaction (S)-4-amino-5-oxopentanoate + tRNA(Glu) + NADP(+) = L-glutamyl-tRNA(Glu) + NADPH + H(+). It functions in the pathway porphyrin-containing compound metabolism; protoporphyrin-IX biosynthesis; 5-aminolevulinate from L-glutamyl-tRNA(Glu): step 1/2. It participates in porphyrin-containing compound metabolism; chlorophyll biosynthesis. Functionally, catalyzes the NADPH-dependent reduction of glutamyl-tRNA(Glu) to glutamate 1-semialdehyde (GSA). The protein is Glutamyl-tRNA reductase of Prochlorococcus marinus (strain MIT 9303).